The following is a 351-amino-acid chain: Ferrochelatase (351 aa).

2 residues coordinate Fe cation: His220 and Glu301.

This sequence belongs to the ferrochelatase family.

It is found in the cytoplasm. The catalysed reaction is heme b + 2 H(+) = protoporphyrin IX + Fe(2+). The protein operates within porphyrin-containing compound metabolism; protoheme biosynthesis; protoheme from protoporphyrin-IX: step 1/1. Catalyzes the ferrous insertion into protoporphyrin IX. This chain is Ferrochelatase, found in Rhodobacter capsulatus (Rhodopseudomonas capsulata).